We begin with the raw amino-acid sequence, 377 residues long: Putative glutamate--cysteine ligase 2 (377 aa).

It belongs to the glutamate--cysteine ligase type 2 family. YbdK subfamily.

The catalysed reaction is L-cysteine + L-glutamate + ATP = gamma-L-glutamyl-L-cysteine + ADP + phosphate + H(+). In terms of biological role, ATP-dependent carboxylate-amine ligase which exhibits weak glutamate--cysteine ligase activity. The polypeptide is Putative glutamate--cysteine ligase 2 (Pseudomonas aeruginosa (strain ATCC 15692 / DSM 22644 / CIP 104116 / JCM 14847 / LMG 12228 / 1C / PRS 101 / PAO1)).